Here is a 210-residue protein sequence, read N- to C-terminus: Large ribosomal subunit protein uL3 (210 aa).

Residues 126 to 152 form a disordered region; the sequence is HGFRGGPKTHGQSDRHRAPGSIGAGTT.

Belongs to the universal ribosomal protein uL3 family. As to quaternary structure, part of the 50S ribosomal subunit. Forms a cluster with proteins L14 and L19.

In terms of biological role, one of the primary rRNA binding proteins, it binds directly near the 3'-end of the 23S rRNA, where it nucleates assembly of the 50S subunit. This is Large ribosomal subunit protein uL3 from Chloroflexus aurantiacus (strain ATCC 29366 / DSM 635 / J-10-fl).